The chain runs to 593 residues: Mitosis inducer protein kinase cdr1 (593 aa).

In terms of domain architecture, Protein kinase spans 12 to 258 (WRLGKTLGTG…IPEVFSHPFL (247 aa)). ATP contacts are provided by residues 18–26 (LGTGSTSCV) and K41. The Proton acceptor role is filled by D128. Position 550 is a phosphoserine (S550).

Belongs to the protein kinase superfamily. CAMK Ser/Thr protein kinase family. NIM1 subfamily. Interacts with msp1.

The enzyme catalyses L-seryl-[protein] + ATP = O-phospho-L-seryl-[protein] + ADP + H(+). The catalysed reaction is L-threonyl-[protein] + ATP = O-phospho-L-threonyl-[protein] + ADP + H(+). Its function is as follows. This protein, a dose-dependent mitotic inducer, appears to function as a negative regulator of mitosis inhibitor wee1 by phosphorylating and inactivating it. The protein is Mitosis inducer protein kinase cdr1 (cdr1) of Schizosaccharomyces pombe (strain 972 / ATCC 24843) (Fission yeast).